Reading from the N-terminus, the 180-residue chain is Virion protein US10 homolog (180 aa).

Belongs to the herpesviridae US10 family. Phosphorylated.

The protein localises to the virion tegument. It is found in the host nucleus matrix. This is Virion protein US10 homolog (64) from Varicella-zoster virus (strain Dumas) (HHV-3).